The chain runs to 156 residues: Small ribosomal subunit protein uS7 (156 aa).

It belongs to the universal ribosomal protein uS7 family. Part of the 30S ribosomal subunit. Contacts proteins S9 and S11.

Functionally, one of the primary rRNA binding proteins, it binds directly to 16S rRNA where it nucleates assembly of the head domain of the 30S subunit. Is located at the subunit interface close to the decoding center, probably blocks exit of the E-site tRNA. The sequence is that of Small ribosomal subunit protein uS7 (rspG) from Streptomyces coelicolor (strain ATCC BAA-471 / A3(2) / M145).